Consider the following 399-residue polypeptide: Zona occludens toxin (399 aa).

Its function is as follows. Increases the permeability of the small intestine mucosa by affecting the structure of intercellular tight junctions (zonula occludens). The sequence is that of Zona occludens toxin (zot) from Vibrio cholerae serotype O1 (strain ATCC 39315 / El Tor Inaba N16961).